Here is a 157-residue protein sequence, read N- to C-terminus: Spore germination protein GerT (157 aa).

It is found in the spore coat. Involved in spore germination; probably required at the earliest stage of germination. This Bacillus subtilis (strain 168) protein is Spore germination protein GerT (gerT).